Here is a 217-residue protein sequence, read N- to C-terminus: Large ribosomal subunit protein uL3 (217 aa).

The disordered stretch occupies residues 135-154 (ATHGNSLSHRAPGSIGQCQT). Gln-153 bears the N5-methylglutamine mark.

The protein belongs to the universal ribosomal protein uL3 family. Part of the 50S ribosomal subunit. Forms a cluster with proteins L14 and L19. Methylated by PrmB.

In terms of biological role, one of the primary rRNA binding proteins, it binds directly near the 3'-end of the 23S rRNA, where it nucleates assembly of the 50S subunit. The protein is Large ribosomal subunit protein uL3 of Coxiella burnetii (strain CbuG_Q212) (Coxiella burnetii (strain Q212)).